The primary structure comprises 63 residues: Large ribosomal subunit protein bL35 (63 aa).

This sequence belongs to the bacterial ribosomal protein bL35 family.

The polypeptide is Large ribosomal subunit protein bL35 (Campylobacter jejuni subsp. doylei (strain ATCC BAA-1458 / RM4099 / 269.97)).